Consider the following 407-residue polypeptide: Snake venom metalloproteinase ACLH (407 aa).

The N-terminal stretch at 1 to 20 is a signal peptide; it reads MIQVLLVTLCLAAFPYQGSS. Residues 21–187 constitute a propeptide that is removed on maturation; the sequence is IILESGNVND…PIKKASQLNL (167 aa). The 197-residue stretch at 193–389 folds into the Peptidase M12B domain; that stretch reads RYVELVTVVD…ENPQCILNKP (197 aa). Ca(2+) is bound by residues E196 and D280. Intrachain disulfides connect C304–C384, C344–C368, and C346–C351. H329 lines the Zn(2+) pocket. E330 is a catalytic residue. The Zn(2+) site is built by H333 and H339. N367 carries N-linked (GlcNAc...) asparagine glycosylation. Ca(2+) contacts are provided by C384 and N387.

It belongs to the venom metalloproteinase (M12B) family. P-I subfamily. Monomer. The cofactor is Zn(2+). In terms of processing, contains sialic acid terminally alpha(2-6)-linked to galactose in a complex N-glycan chain. In terms of tissue distribution, expressed by the venom gland.

It is found in the secreted. Functionally, this zinc hemorrhagic metalloproteinase has fibrino(geno)lytic activities. It causes hemorrhage and has myonecrotic activity on both fiber types I and II. The recombinant enzyme, without post-translational modifications, also has proteolytic activity, but does not show any hemorrhagic activity. This chain is Snake venom metalloproteinase ACLH, found in Agkistrodon contortrix laticinctus (Broad-banded copperhead).